We begin with the raw amino-acid sequence, 264 residues long: MAATGEALTPQGYIQHHLTNLSVGEGFWTWHIDSLFFSVGLGVLFLWLFHSVGKKATTGVPGKLQCFVEMIVEFVDNSVKETFHGRNPVIAPLALTIFVWVFMMNFMDMVPVDWIPELAMAAGIPYMKVVPTTDLNITFSMAIGVFLLIIYYSIKVKGVSGFVKELTMQPFNHWAMIPVNFLLETVTLIAKPISLALRLFGNLYAGELIFILIALMYGANWALSTLGVTLQLGWLIFHILVITLQAFIFMMLTIVYLSMAHEDH.

6 helical membrane passes run 32–52, 89–109, 134–154, 177–197, 208–228, and 235–255; these read IDSLFFSVGLGVLFLWLFHSV, VIAPLALTIFVWVFMMNFMDM, DLNITFSMAIGVFLLIIYYSI, IPVNFLLETVTLIAKPISLAL, LIFILIALMYGANWALSTLGV, and LIFHILVITLQAFIFMMLTIV.

Belongs to the ATPase A chain family. In terms of assembly, F-type ATPases have 2 components, CF(1) - the catalytic core - and CF(0) - the membrane proton channel. CF(1) has five subunits: alpha(3), beta(3), gamma(1), delta(1), epsilon(1). CF(0) has three main subunits: a(1), b(2) and c(9-12). The alpha and beta chains form an alternating ring which encloses part of the gamma chain. CF(1) is attached to CF(0) by a central stalk formed by the gamma and epsilon chains, while a peripheral stalk is formed by the delta and b chains.

The protein resides in the cell inner membrane. In terms of biological role, key component of the proton channel; it plays a direct role in the translocation of protons across the membrane. The sequence is that of ATP synthase subunit a from Shewanella piezotolerans (strain WP3 / JCM 13877).